Here is a 116-residue protein sequence, read N- to C-terminus: MIEKVYEFKRDAKTKVVEKLVNTEHVQINHIVLPRGEQMPKHYSNSYVHLIIIKGEMTLTLEDQEPHNYKEGNIVYVPFNVKMLIQNINSDILEFFVVKAPHPKKLNAPEDPIKCE.

This is an uncharacterized protein from Methanocaldococcus jannaschii (strain ATCC 43067 / DSM 2661 / JAL-1 / JCM 10045 / NBRC 100440) (Methanococcus jannaschii).